The primary structure comprises 313 residues: Aspartate carbamoyltransferase catalytic subunit (313 aa).

2 residues coordinate carbamoyl phosphate: arginine 58 and threonine 59. Lysine 86 serves as a coordination point for L-aspartate. Carbamoyl phosphate-binding residues include arginine 108, histidine 136, and glutamine 139. Residues arginine 169 and arginine 223 each contribute to the L-aspartate site. Positions 265 and 266 each coordinate carbamoyl phosphate.

This sequence belongs to the aspartate/ornithine carbamoyltransferase superfamily. ATCase family. In terms of assembly, heterododecamer (2C3:3R2) of six catalytic PyrB chains organized as two trimers (C3), and six regulatory PyrI chains organized as three dimers (R2).

The enzyme catalyses carbamoyl phosphate + L-aspartate = N-carbamoyl-L-aspartate + phosphate + H(+). Its pathway is pyrimidine metabolism; UMP biosynthesis via de novo pathway; (S)-dihydroorotate from bicarbonate: step 2/3. In terms of biological role, catalyzes the condensation of carbamoyl phosphate and aspartate to form carbamoyl aspartate and inorganic phosphate, the committed step in the de novo pyrimidine nucleotide biosynthesis pathway. The polypeptide is Aspartate carbamoyltransferase catalytic subunit (Anaeromyxobacter sp. (strain K)).